Consider the following 105-residue polypeptide: uncharacterized protein (105 aa).

The interval 47–105 (ENASAPRIQPSVTPSPAAPPSTDQLMMEKMMGSAGLNKYRKQEKEKQEEDGNGESLFDF) is disordered. Residues 86–95 (RKQEKEKQEE) are compositionally biased toward basic and acidic residues.

This is an uncharacterized protein from Bacillus subtilis (strain 168).